A 203-amino-acid polypeptide reads, in one-letter code: Proteasome subunit beta 2 (203 aa).

The propeptide at 1–9 (MGEEVQIGA) is removed in mature form; by autocatalysis. Thr-10 (nucleophile) is an active-site residue.

Belongs to the peptidase T1B family. The 20S proteasome core is composed of 14 alpha and 14 beta subunits that assemble into four stacked heptameric rings, resulting in a barrel-shaped structure. The two inner rings, each composed of seven catalytic beta subunits, are sandwiched by two outer rings, each composed of seven alpha subunits. The catalytic chamber with the active sites is on the inside of the barrel. Has a gated structure, the ends of the cylinder being occluded by the N-termini of the alpha-subunits. Is capped at one or both ends by the proteasome regulatory ATPase, PAN.

Its subcellular location is the cytoplasm. The enzyme catalyses Cleavage of peptide bonds with very broad specificity.. Its activity is regulated as follows. The formation of the proteasomal ATPase PAN-20S proteasome complex, via the docking of the C-termini of PAN into the intersubunit pockets in the alpha-rings, triggers opening of the gate for substrate entry. Interconversion between the open-gate and close-gate conformations leads to a dynamic regulation of the 20S proteasome proteolysis activity. Its function is as follows. Component of the proteasome core, a large protease complex with broad specificity involved in protein degradation. This is Proteasome subunit beta 2 from Pyrobaculum aerophilum (strain ATCC 51768 / DSM 7523 / JCM 9630 / CIP 104966 / NBRC 100827 / IM2).